We begin with the raw amino-acid sequence, 142 residues long: Heat shock protein HSP.16.4 (142 aa).

Positions 27–142 constitute a sHSP domain; the sequence is NLFNDLKSNL…KEIKTSIPIE (116 aa).

Belongs to the small heat shock protein (HSP20) family.

It localises to the cytoplasm. This is Heat shock protein HSP.16.4 from Streptococcus thermophilus.